The primary structure comprises 464 residues: tRNA modification GTPase MnmE (464 aa).

Residues Arg-26, Glu-92, and Arg-131 each contribute to the (6S)-5-formyl-5,6,7,8-tetrahydrofolate site. The TrmE-type G domain maps to 227-385 (GIKVAILGRV…LISALKDYVS (159 aa)). Asn-237 is a binding site for K(+). GTP contacts are provided by residues 237 to 242 (NAGKSS), 256 to 262 (SNIAGTT), and 281 to 284 (DTAG). Ser-241 lines the Mg(2+) pocket. Residues Ser-256, Ile-258, and Thr-261 each contribute to the K(+) site. Thr-262 is a Mg(2+) binding site. Lys-464 provides a ligand contact to (6S)-5-formyl-5,6,7,8-tetrahydrofolate.

Belongs to the TRAFAC class TrmE-Era-EngA-EngB-Septin-like GTPase superfamily. TrmE GTPase family. In terms of assembly, homodimer. Heterotetramer of two MnmE and two MnmG subunits. K(+) is required as a cofactor.

The protein resides in the cytoplasm. Functionally, exhibits a very high intrinsic GTPase hydrolysis rate. Involved in the addition of a carboxymethylaminomethyl (cmnm) group at the wobble position (U34) of certain tRNAs, forming tRNA-cmnm(5)s(2)U34. This chain is tRNA modification GTPase MnmE, found in Brachyspira hyodysenteriae (strain ATCC 49526 / WA1).